Here is a 488-residue protein sequence, read N- to C-terminus: Aspartyl/glutamyl-tRNA(Asn/Gln) amidotransferase subunit B (488 aa).

Belongs to the GatB/GatE family. GatB subfamily. Heterotrimer of A, B and C subunits.

The catalysed reaction is L-glutamyl-tRNA(Gln) + L-glutamine + ATP + H2O = L-glutaminyl-tRNA(Gln) + L-glutamate + ADP + phosphate + H(+). The enzyme catalyses L-aspartyl-tRNA(Asn) + L-glutamine + ATP + H2O = L-asparaginyl-tRNA(Asn) + L-glutamate + ADP + phosphate + 2 H(+). Functionally, allows the formation of correctly charged Asn-tRNA(Asn) or Gln-tRNA(Gln) through the transamidation of misacylated Asp-tRNA(Asn) or Glu-tRNA(Gln) in organisms which lack either or both of asparaginyl-tRNA or glutaminyl-tRNA synthetases. The reaction takes place in the presence of glutamine and ATP through an activated phospho-Asp-tRNA(Asn) or phospho-Glu-tRNA(Gln). The polypeptide is Aspartyl/glutamyl-tRNA(Asn/Gln) amidotransferase subunit B (Ralstonia nicotianae (strain ATCC BAA-1114 / GMI1000) (Ralstonia solanacearum)).